The primary structure comprises 139 residues: Intrinsically disordered protein, expressed in pharynx 15 (139 aa).

The span at Met-1–Thr-12 shows a compositional bias: polar residues. The segment at Met-1–Ser-98 is disordered. 2 stretches are compositionally biased toward low complexity: residues Thr-13–Thr-41 and Gln-49–Ser-98.

This Caenorhabditis elegans protein is Intrinsically disordered protein, expressed in pharynx 15.